The primary structure comprises 1506 residues: DDB1- and CUL4-associated factor 1 (1506 aa).

The segment at 141–499 (QPLRTYSTGL…STLEILNLED (359 aa)) is protein kinase-like. Residues Ser-202 and Ser-254 each carry the phosphoserine modification. Residues 241 to 275 (RLDSSHKTSSRVNSATKPEEGGLKKNKSAKHGDRE) are disordered. The Chromo domain occupies 561-592 (SYTHEQIVEMMEFLIEYGPAQLYWEPAEVFLK). Residue Lys-700 is modified to N6-acetyllysine. A Phosphoserine modification is found at Ser-827. The region spanning 845 to 877 (PEKELLLLIRNHLISKGLGETATVLTREADLPM) is the LisH domain. Position 887 is a phosphothreonine (Thr-887). Residues Ser-894 and Ser-897 each carry the phosphoserine modification. 2 disordered regions span residues 916-946 (ATVGASAPSAPPAHPPPRPPQGSLPLPGPSY) and 977-999 (KSDHGAYSQSPAIKKQLDRHLPS). Pro residues predominate over residues 924-943 (SAPPAHPPPRPPQGSLPLPG). 2 positions are modified to phosphoserine: Ser-978 and Ser-999. WD repeat units follow at residues 1090-1129 (EDESGFTCCAFSARERFLMLGTCTGQLKLYNVFSGQEEAS), 1132-1173 (CHNS…DMKH), 1175-1212 (FTEDHYVEFSKHSQDRVIGTKGDIAHIYDIQTGNKLLT), 1214-1246 (FNPDLANNYKRNCATFNPTDDLVLNDGVLWDVR), and 1247-1289 (SAQA…LLHT). A WD repeat-like region region spans residues 1090–1289 (EDESGFTCCA…DLRTFHLLHT (200 aa)). 2 short sequence motifs (DWD box) span residues 1241–1248 (VLWDVRSA) and 1277–1284 (EIWDLRTF). Ser-1327 is subject to Phosphoserine. Residues 1392–1506 (RLAEDEDEEE…EDDIILSLNE (115 aa)) are disordered. Acidic residues-rich tracts occupy residues 1395 to 1482 (EDED…EEVE) and 1489 to 1500 (DSSDNSDLEDDI). The interaction with NF2 stretch occupies residues 1417-1506 (DDDTDDLDEL…EDDIILSLNE (90 aa)).

Belongs to the VPRBP/DCAF1 family. As to quaternary structure, component of the DCX (DDB1-CUL4-X-box) E3 ubiquitin-protein ligase complex, named CUL4A-RBX1-DDB1-DCAF1/VPRBP complex. Interacts with DDB1; the interaction is direct. Also forms a ternary complex with DDA1 and DDB1. Interacts with NF2 (via FERM domain). Component of the EDVP complex, a E3 ligase complex containing DYRK2, EDD/UBR5, DDB1 and DCAF1. Interacts with DYRK2; the interaction is direct. Interacts with RAG1; the interaction is direct. Interacts with LLGL1 and LLGL2. Interacts with histone H3. Interacts with ESR1 and LATS1; probably recruited by LATS1 to promote ESR1 ubiquitination and ubiquitin-mediated proteasomal degradation. Directly interacts with TET1, TET2 and TET3 (via C-terminus). Interacts with CEP78; promoting DCAF1 localization to centrosomes. In terms of tissue distribution, widely expressed. Expressed in oocytes and zygotes (at protein level).

Its subcellular location is the cytoplasm. It localises to the nucleus. The protein localises to the cytoskeleton. The protein resides in the microtubule organizing center. It is found in the centrosome. The enzyme catalyses L-seryl-[protein] + ATP = O-phospho-L-seryl-[protein] + ADP + H(+). The catalysed reaction is L-threonyl-[protein] + ATP = O-phospho-L-threonyl-[protein] + ADP + H(+). It participates in protein modification; protein ubiquitination. Functionally, acts both as a substrate recognition component of E3 ubiquitin-protein ligase complexes and as an atypical serine/threonine-protein kinase, playing key roles in various processes such as cell cycle, telomerase regulation and histone modification. Probable substrate-specific adapter of a DCX (DDB1-CUL4-X-box) E3 ubiquitin-protein ligase complex, named CUL4A-RBX1-DDB1-DCAF1/VPRBP complex, which mediates ubiquitination and proteasome-dependent degradation of proteins such as NF2. Involved in the turnover of methylated proteins: recognizes and binds methylated proteins via its chromo domain, leading to ubiquitination of target proteins by the RBX1-DDB1-DCAF1/VPRBP complex. The CUL4A-RBX1-DDB1-DCAF1/VPRBP complex is also involved in B-cell development: DCAF1 is recruited by RAG1 to ubiquitinate proteins, leading to limit error-prone repair during V(D)J recombination. Also part of the EDVP complex, an E3 ligase complex that mediates ubiquitination of proteins such as TERT, leading to TERT degradation and telomerase inhibition. The EDVP complex also mediates ubiquitination and degradation of CCP110. Also acts as an atypical serine/threonine-protein kinase that specifically mediates phosphorylation of 'Thr-120' of histone H2A (H2AT120ph) in a nucleosomal context, thereby repressing transcription. H2AT120ph is present in the regulatory region of many tumor suppresor genes, down-regulates their transcription and is present at high level in a number of tumors. Involved in JNK-mediated apoptosis during cell competition process via its interaction with LLGL1 and LLGL2. By acting on TET dioxygenses, essential for oocyte maintenance at the primordial follicle stage, hence essential for female fertility. This chain is DDB1- and CUL4-associated factor 1, found in Mus musculus (Mouse).